A 262-amino-acid polypeptide reads, in one-letter code: Hydroxyethylthiazole kinase (262 aa).

Met50 provides a ligand contact to substrate. The ATP site is built by Arg125 and Thr171. Gly198 serves as a coordination point for substrate.

Belongs to the Thz kinase family. Mg(2+) is required as a cofactor.

It catalyses the reaction 5-(2-hydroxyethyl)-4-methylthiazole + ATP = 4-methyl-5-(2-phosphooxyethyl)-thiazole + ADP + H(+). The protein operates within cofactor biosynthesis; thiamine diphosphate biosynthesis; 4-methyl-5-(2-phosphoethyl)-thiazole from 5-(2-hydroxyethyl)-4-methylthiazole: step 1/1. Catalyzes the phosphorylation of the hydroxyl group of 4-methyl-5-beta-hydroxyethylthiazole (THZ). The polypeptide is Hydroxyethylthiazole kinase (Escherichia coli O6:K15:H31 (strain 536 / UPEC)).